Here is a 462-residue protein sequence, read N- to C-terminus: ATP synthase subunit beta (462 aa).

151–158 serves as a coordination point for ATP; it reads GGAGVGKT.

Belongs to the ATPase alpha/beta chains family. As to quaternary structure, F-type ATPases have 2 components, CF(1) - the catalytic core - and CF(0) - the membrane proton channel. CF(1) has five subunits: alpha(3), beta(3), gamma(1), delta(1), epsilon(1). CF(0) has four main subunits: a(1), b(1), b'(1) and c(9-12).

The protein resides in the cell inner membrane. The catalysed reaction is ATP + H2O + 4 H(+)(in) = ADP + phosphate + 5 H(+)(out). In terms of biological role, produces ATP from ADP in the presence of a proton gradient across the membrane. The catalytic sites are hosted primarily by the beta subunits. The chain is ATP synthase subunit beta from Chlorobium limicola (strain DSM 245 / NBRC 103803 / 6330).